The following is a 151-amino-acid chain: uncharacterized protein (151 aa).

This is an uncharacterized protein from Aquifex aeolicus (strain VF5).